Here is a 511-residue protein sequence, read N- to C-terminus: Apolipoprotein N-acyltransferase (511 aa).

6 consecutive transmembrane segments (helical) span residues 7 to 25, 58 to 78, 90 to 110, 125 to 145, 163 to 183, and 192 to 212; these read PGWPGHLLALAAGALTPLA, GWWYGFGAFGAGTSWIYVSIH, FLMLGFTAGVAFFFALPAWLW, LAFAALWLALELFRSWFLTGF, VPVGGVWLSSFVIALSAALLV, and GASLLLALVLLLGPWAAGLYL. The CN hydrolase domain maps to 230–470; the sequence is IQGNIAQELK…QGILRGEVIP (241 aa). Glu-269 functions as the Proton acceptor in the catalytic mechanism. Residue Lys-330 is part of the active site. Catalysis depends on Cys-382, which acts as the Nucleophile. The helical transmembrane segment at 478-498 threads the bilayer; sequence LQYRVWPLAGLAGVLLLWALL.

It belongs to the CN hydrolase family. Apolipoprotein N-acyltransferase subfamily.

Its subcellular location is the cell inner membrane. It catalyses the reaction N-terminal S-1,2-diacyl-sn-glyceryl-L-cysteinyl-[lipoprotein] + a glycerophospholipid = N-acyl-S-1,2-diacyl-sn-glyceryl-L-cysteinyl-[lipoprotein] + a 2-acyl-sn-glycero-3-phospholipid + H(+). Its pathway is protein modification; lipoprotein biosynthesis (N-acyl transfer). Functionally, catalyzes the phospholipid dependent N-acylation of the N-terminal cysteine of apolipoprotein, the last step in lipoprotein maturation. The protein is Apolipoprotein N-acyltransferase of Pseudomonas paraeruginosa (strain DSM 24068 / PA7) (Pseudomonas aeruginosa (strain PA7)).